The sequence spans 830 residues: ABC transporter G family member STR (830 aa).

Topologically, residues 1-551 (MAKFKRTDTN…RTTLNVIRTP (551 aa)) are cytoplasmic. An ABC transporter domain is found at 46-297 (LEFNNLSYSV…LAGFARPVPD (252 aa)). An ATP-binding site is contributed by 90–97 (GPSGAGKS). Disordered regions lie at residues 333–356 (DQAA…PYAK), 368–422 (SHFS…SMQS), and 471–491 (SMSS…NKTP). Polar residues predominate over residues 368 to 378 (SHFSTGNMNSQ). The segment covering 395 to 405 (DYEDDDDEDEF) has biased composition (acidic residues). Over residues 471-483 (SMSSSQFSMTQQT) the composition is skewed to low complexity. The helical transmembrane segment at 552-572 (ELFLSREIVLTVMGLVLSSFF) threads the bilayer. Residues 573-588 (KKLSHFDFKTINHLLN) lie on the Extracellular side of the membrane. Residues 589 to 609 (FYIFTICLVFFSSNDAVPTFI) form a helical membrane-spanning segment. Topologically, residues 610–630 (QERFIFIRETSHNAYRASSYV) are cytoplasmic. The helical transmembrane segment at 631–651 (ISSLIVYLPFFAIQGFTFAGI) threads the bilayer. The Extracellular portion of the chain corresponds to 652–661 (TQYILHLNSS). Asn-659 carries an N-linked (GlcNAc...) asparagine glycan. Residues 662 to 682 (ILSFWLILYSSLVTSNAYVML) form a helical membrane-spanning segment. The Cytoplasmic portion of the chain corresponds to 683 to 690 (VSALVPSY). Residues 691-711 (ITGYAVVIATTALFFLTCGFF) traverse the membrane as a helical segment. Topologically, residues 712–798 (LKRTQIPLVW…LFSMDIREEN (87 aa)) are extracellular. Asn-771 and Asn-780 each carry an N-linked (GlcNAc...) asparagine glycan. A helical membrane pass occupies residues 799–819 (IWLDIVILLAWGVLYRLFFYV). Topologically, residues 820–830 (VLRFYSKNERK) are cytoplasmic.

Belongs to the ABC transporter superfamily. ABCG family. Stunted arbuscule (STR) subfamily. As to quaternary structure, heterodimerizes with STR2; the resulting transporter is located in the peri-arbuscular membrane.

Its subcellular location is the cell membrane. Together with STR2, required for arbuscule development in arbuscular mycorrhizal (AM) symbiosis. The polypeptide is ABC transporter G family member STR (Petunia hybrida (Petunia)).